The primary structure comprises 1829 residues: Unconventional myosin-Va (1829 aa).

The region spanning threonine 8–proline 60 is the Myosin N-terminal SH3-like domain. In terms of domain architecture, Myosin motor spans valine 69–alanine 764. Residue glycine 163–threonine 170 participates in ATP binding. Positions alanine 599–threonine 635 are disordered. Residues leucine 644–aspartate 666 are actin-binding. IQ domains are found at residues leucine 767–arginine 789, methionine 790–arginine 814, arginine 815–cysteine 837, methionine 838–leucine 862, arginine 863–leucine 887, and lysine 888–serine 915. 2 coiled-coil regions span residues valine 916–threonine 1239 and glycine 1315–valine 1419. Disordered stretches follow at residues isoleucine 1106–lysine 1148 and lysine 1170–glycine 1199. A compositionally biased stretch (polar residues) spans threonine 1117–isoleucine 1131. Composition is skewed to basic and acidic residues over residues leucine 1137 to lysine 1148 and lysine 1170 to proline 1196. Residues threonine 1508–aspartate 1784 form the Dilute domain. Threonine 1734 is modified (phosphothreonine).

This sequence belongs to the TRAFAC class myosin-kinesin ATPase superfamily. Myosin family. In terms of assembly, may be a homodimer, which associates with multiple calmodulin or myosin light chains. As to expression, neuronal and non-neuronal cells of the brain.

It is found in the golgi apparatus membrane. The enzyme catalyses ATP + H2O = ADP + phosphate + H(+). Its function is as follows. Processive actin-based motor that can move in large steps approximating the 36-nm pseudo-repeat of the actin filament. Can hydrolyze ATP in the presence of actin, which is essential for its function as a motor protein. Involved in melanosome transport. Also mediates the transport of vesicles to the plasma membrane. May also be required for some polarization process involved in dendrite formation. This chain is Unconventional myosin-Va (MYO5A), found in Gallus gallus (Chicken).